A 513-amino-acid chain; its full sequence is Zinc finger CCCH-type with G patch domain-containing protein (513 aa).

The C3H1-type zinc finger occupies 155-178 (PCSYYLEGECRFDETKCRFSHGAL). The segment covering 252–261 (DQEEDDELSS) has biased composition (acidic residues). A disordered region spans residues 252-282 (DQEEDDELSSEESNSSMNNESSDEAESDMDD). The segment covering 262–271 (EESNSSMNNE) has biased composition (low complexity). Residues 272–282 (SSDEAESDMDD) show a composition bias toward acidic residues. Positions 312–358 (TRGIGSKLMEKMGYIHGTGLGSDGRGIVTPVSAQILPQGRSLDACME) constitute a G-patch domain. The span at 478-495 (VQMQSHKQELATLQAQER) shows a compositional bias: polar residues. Residues 478-513 (VQMQSHKQELATLQAQERSLSKEQQTRKSKNKMFEF) form a disordered region. Positions 496-513 (SLSKEQQTRKSKNKMFEF) are enriched in basic and acidic residues.

The protein localises to the nucleus. Its function is as follows. Transcription repressor. The polypeptide is Zinc finger CCCH-type with G patch domain-containing protein (Drosophila erecta (Fruit fly)).